The following is a 494-amino-acid chain: Catalase (494 aa).

Residues His65 and Asn138 contribute to the active site. Tyr348 is a binding site for heme.

It belongs to the catalase family. As to quaternary structure, homotetramer. Heme is required as a cofactor.

It is found in the cytoplasm. The protein localises to the cytosol. The protein resides in the peroxisome matrix. It catalyses the reaction 2 H2O2 = O2 + 2 H2O. Its function is as follows. Catalyzes the degradation of hydrogen peroxide (H(2)O(2)) generated by peroxisomal oxidases to water and oxygen, thereby protecting cells from the toxic effects of hydrogen peroxide. This chain is Catalase, found in Pisum sativum (Garden pea).